A 311-amino-acid chain; its full sequence is uncharacterized protein (311 aa).

A compositionally biased stretch (polar residues) spans 1-12 (MPATDTNSTHTT). 2 disordered regions span residues 1 to 44 (MPAT…DEEH) and 205 to 268 (ERPS…ATVH). Over residues 35-44 (TSDKHADEEH) the composition is skewed to basic and acidic residues.

It belongs to the HHV-5 HKLF1 family.

This is an uncharacterized protein from Human cytomegalovirus (strain AD169) (HHV-5).